The following is a 221-amino-acid chain: Thiol:disulfide interchange protein TlpA (221 aa).

Topologically, residues 1 to 11 are cytoplasmic; sequence MLDTKPSATRR. Residues 12–35 traverse the membrane as a helical segment; the sequence is IPLVIATVAVGGLAGFAALYGLGL. Topologically, residues 36 to 221 are periplasmic; sequence SRAPTGDPAC…AATGKAAAAL (186 aa). Cystine bridges form between cysteine 45/cysteine 190 and cysteine 107/cysteine 110. One can recognise a Thioredoxin domain in the interval 69 to 215; sequence ASAPLKLPDL…ALKLIRAATG (147 aa).

This sequence belongs to the thioredoxin family. As to quaternary structure, monomer.

The protein resides in the cell membrane. Functionally, involved in cytochrome aa3 assembly. This is Thiol:disulfide interchange protein TlpA (tlpA) from Bradyrhizobium diazoefficiens (strain JCM 10833 / BCRC 13528 / IAM 13628 / NBRC 14792 / USDA 110).